Consider the following 263-residue polypeptide: MDTLTASREKLAEKSKISVKNLDFFYGKFHALKSINLEIPEKKVTAFIGPSGCGKSTLLRIFNRMYELYPEQRAEGDVTFDGENLLTSKKDVALIRSKVGMVFQKPTPFPMSIYDNIAFGVKLFESLNASDMDERVEWALRKAALWGEVKDKLNQSGSSLSGGQQQRLCIARGIAIKPEVLLLDEPCSALDPISTAKVEELIAELKNDYTVVIVTHNMQQAARCSDYTAYMYLGDLVEFGATEDLFFKPKRKETEDYITGRFG.

The 242-residue stretch at 17 to 258 folds into the ABC transporter domain; it reads ISVKNLDFFY…PKRKETEDYI (242 aa). ATP is bound at residue 49 to 56; the sequence is GPSGCGKS.

It belongs to the ABC transporter superfamily. Phosphate importer (TC 3.A.1.7) family. In terms of assembly, the complex is composed of two ATP-binding proteins (PstB), two transmembrane proteins (PstC and PstA) and a solute-binding protein (PstS).

It localises to the cell inner membrane. It catalyses the reaction phosphate(out) + ATP + H2O = ADP + 2 phosphate(in) + H(+). Part of the ABC transporter complex PstSACB involved in phosphate import. Responsible for energy coupling to the transport system. The polypeptide is Phosphate import ATP-binding protein PstB (Polaromonas sp. (strain JS666 / ATCC BAA-500)).